A 634-amino-acid chain; its full sequence is Microtubule-associated protein 70-2 (634 aa).

The tract at residues methionine 1–serine 57 is disordered. The span at valine 25–valine 35 shows a compositional bias: polar residues. Residues serine 36–serine 47 are compositionally biased toward low complexity. Positions aspartate 74–leucine 392 form a coiled coil. Residues isoleucine 258–serine 494 are required for targeting to microtubules. 2 stretches are compositionally biased toward polar residues: residues arginine 393 to glutamine 417 and methionine 443 to serine 464. 2 disordered regions span residues arginine 393–glycine 526 and valine 594–glutamine 634. A coiled-coil region spans residues leucine 532–arginine 601. Over residues phenylalanine 605–glutamine 616 the composition is skewed to polar residues.

Belongs to the MAP70 family.

Its subcellular location is the cytoplasm. It localises to the cytoskeleton. Functionally, plant-specific protein that interact with microtubules. This chain is Microtubule-associated protein 70-2 (MAP70.2), found in Arabidopsis thaliana (Mouse-ear cress).